The chain runs to 548 residues: Mannosyltransferase APTG1 (548 aa).

Residues 1–23 (MDIRKRKNAGGDGDGGADGASVN) form a disordered region. 3 consecutive transmembrane segments (helical) span residues 41 to 61 (IFLF…TYFN), 98 to 118 (LFAF…YIMI), and 146 to 166 (GNVA…FFCL). A glycan (N-linked (GlcNAc...) asparagine) is linked at Asn167. A run of 7 helical transmembrane segments spans residues 169-189 (TFSN…WPCI), 204-224 (LVIA…WLYV), 238-258 (FIIL…CLLD), 260-280 (LMYG…FLSS), 294-314 (FTQG…AGII), 320-340 (KLSA…HKEF), and 342-362 (FVLP…AQME). Asn382 is a glycosylation site (N-linked (GlcNAc...) asparagine). The helical transmembrane segment at 392 to 412 (LSVYFLLATNIPMALYMSLFH) threads the bilayer. N-linked (GlcNAc...) asparagine glycosylation is present at Asn490.

It belongs to the glycosyltransferase 22 family. In terms of tissue distribution, mostly expressed, mainly in vascular tissues, in leaves, roots, stems, flowers, siliques and pollen, and, to a lower extent, in seedlings.

It localises to the endoplasmic reticulum membrane. In terms of biological role, mannosyltransferase involved in glycosylphosphatidylinositol-anchor biosynthesis. Required for the pollen tube micropylar guidance and embryo development by regulating GPI-anchor mediated protein localization (e.g. COBL10 and A36). The chain is Mannosyltransferase APTG1 from Arabidopsis thaliana (Mouse-ear cress).